The sequence spans 349 residues: Glycerol-3-phosphate dehydrogenase [NAD(+)], cytoplasmic (349 aa).

Gly-10 to Gly-15 lines the NAD(+) pocket. A substrate-binding site is contributed by Lys-120. Ala-153 contacts NAD(+). Ser-154 is modified (phosphoserine). Lys-204 acts as the Proton acceptor in catalysis. Arg-269 is a binding site for NAD(+). Residue Arg-269–Asn-270 participates in substrate binding. Position 289 is an N6-succinyllysine (Lys-289). 2 residues coordinate NAD(+): Lys-296 and Gln-298. Tyr-326 bears the Phosphotyrosine mark.

Belongs to the NAD-dependent glycerol-3-phosphate dehydrogenase family. Homodimer.

Its subcellular location is the cytoplasm. It catalyses the reaction sn-glycerol 3-phosphate + NAD(+) = dihydroxyacetone phosphate + NADH + H(+). Functionally, has glycerol-3-phosphate dehydrogenase activity. The sequence is that of Glycerol-3-phosphate dehydrogenase [NAD(+)], cytoplasmic from Mus musculus (Mouse).